Reading from the N-terminus, the 474-residue chain is Transcription factor fscB (474 aa).

Disordered regions lie at residues 114-153 (VDEL…SYWT) and 207-242 (GKEV…NPAP). The segment covering 120–131 (SSDTRSSLSPSS) has biased composition (low complexity). The segment covering 132 to 153 (HNTTTGHETGLSSVTPPQSYWT) has biased composition (polar residues). Residues 207–221 (GKEVTKRNKRSRTEA) are compositionally biased toward basic and acidic residues. Positions 222-240 (QEASNSPCASSTADSQTNP) are enriched in polar residues.

The protein belongs to the POU transcription factor family. Class-3 subfamily.

The protein resides in the nucleus. In terms of biological role, transcription factor; part of the fragmented gene cluster that mediates the biosynthesis of fusarochromene, a tryptophan-derived metabolite closely related to a group of mycotoxins including fusarochromanone. This Fusarium equiseti (Fusarium scirpi) protein is Transcription factor fscB.